Reading from the N-terminus, the 109-residue chain is Ycf20-like protein (109 aa).

Belongs to the ycf20 family.

This is Ycf20-like protein from Synechocystis sp. (strain ATCC 27184 / PCC 6803 / Kazusa).